Consider the following 165-residue polypeptide: 3-isopropylmalate dehydratase small subunit (165 aa).

Belongs to the LeuD family. LeuD type 2 subfamily. In terms of assembly, heterodimer of LeuC and LeuD.

The enzyme catalyses (2R,3S)-3-isopropylmalate = (2S)-2-isopropylmalate. The protein operates within amino-acid biosynthesis; L-leucine biosynthesis; L-leucine from 3-methyl-2-oxobutanoate: step 2/4. In terms of biological role, catalyzes the isomerization between 2-isopropylmalate and 3-isopropylmalate, via the formation of 2-isopropylmaleate. This is 3-isopropylmalate dehydratase small subunit from Halothermothrix orenii (strain H 168 / OCM 544 / DSM 9562).